The following is a 130-amino-acid chain: Small ribosomal subunit protein uS9 (130 aa).

The protein belongs to the universal ribosomal protein uS9 family.

In Sodalis glossinidius (strain morsitans), this protein is Small ribosomal subunit protein uS9.